The chain runs to 351 residues: UDP-N-acetylglucosamine--N-acetylmuramyl-(pentapeptide) pyrophosphoryl-undecaprenol N-acetylglucosamine transferase (351 aa).

UDP-N-acetyl-alpha-D-glucosamine-binding positions include 12–14 (TGG), asparagine 124, arginine 160, serine 188, isoleucine 239, 258–263 (ALTVCE), and glutamine 283.

The protein belongs to the glycosyltransferase 28 family. MurG subfamily.

Its subcellular location is the cell inner membrane. The catalysed reaction is di-trans,octa-cis-undecaprenyl diphospho-N-acetyl-alpha-D-muramoyl-L-alanyl-D-glutamyl-meso-2,6-diaminopimeloyl-D-alanyl-D-alanine + UDP-N-acetyl-alpha-D-glucosamine = di-trans,octa-cis-undecaprenyl diphospho-[N-acetyl-alpha-D-glucosaminyl-(1-&gt;4)]-N-acetyl-alpha-D-muramoyl-L-alanyl-D-glutamyl-meso-2,6-diaminopimeloyl-D-alanyl-D-alanine + UDP + H(+). Its pathway is cell wall biogenesis; peptidoglycan biosynthesis. Cell wall formation. Catalyzes the transfer of a GlcNAc subunit on undecaprenyl-pyrophosphoryl-MurNAc-pentapeptide (lipid intermediate I) to form undecaprenyl-pyrophosphoryl-MurNAc-(pentapeptide)GlcNAc (lipid intermediate II). In Actinobacillus pleuropneumoniae serotype 7 (strain AP76), this protein is UDP-N-acetylglucosamine--N-acetylmuramyl-(pentapeptide) pyrophosphoryl-undecaprenol N-acetylglucosamine transferase.